Reading from the N-terminus, the 244-residue chain is Protein crossbronx (244 aa).

Positions 20-176 constitute a UBC core domain; that stretch reads QQEYKILAEY…VQKNIKESKE (157 aa). Residues 209-244 form a disordered region; sequence AGRSKQTEPSAQQANGGHATGLSWVKEGEFKPLSIE.

It belongs to the ubiquitin-conjugating enzyme family. FTS subfamily.

The sequence is that of Protein crossbronx (cbx) from Drosophila erecta (Fruit fly).